Here is a 448-residue protein sequence, read N- to C-terminus: Acyl-lipid (9-3)-desaturase (448 aa).

In terms of domain architecture, Cytochrome b5 heme-binding spans 6–90 (KKYITSDELK…LKDYSVSEVS (85 aa)). Heme contacts are provided by His41 and His64. 2 helical membrane-spanning segments follow: residues 112–132 (IMFA…YGVL) and 137–157 (VLVH…SGWI). Positions 159–163 (HDAGH) match the Histidine box-1 motif. Residues 172 to 192 (LNKFMGIFAANCLSGISIGWW) form a helical membrane-spanning segment. The Histidine box-2 signature appears at 196–200 (HNAHH). The next 3 helical transmembrane spans lie at 212–232 (LQYI…TSHF), 254–274 (FYPI…IMLL), and 286–306 (LLGC…LPNW). The Histidine box-3 signature appears at 373–377 (QIEHH).

This sequence belongs to the fatty acid desaturase type 1 family.

It is found in the endoplasmic reticulum membrane. The enzyme catalyses (9Z,12Z,15Z)-octadecatrienoyl-containing glycerolipid + 2 Fe(II)-[cytochrome b5] + O2 + 2 H(+) = (6Z,9Z,12Z,15Z)-octadecatetraenoyl-containing glycerolipid + 2 Fe(III)-[cytochrome b5] + 2 H2O. It carries out the reaction a (9Z,12Z)-octadecadienoyl-containing glycerolipid + 2 Fe(II)-[cytochrome b5] + O2 + 2 H(+) = (6Z,9Z,12Z)-octadecatrienoyl-containing glycerolipid + 2 Fe(III)-[cytochrome b5] + 2 H2O. It participates in lipid metabolism; polyunsaturated fatty acid biosynthesis. Fatty acid desaturase able to introduce a delta(6)-double bond into delta(9)-unsaturated fatty-acid substrates. Can use both linoleic acid (18:2(9Z,12Z)) and alpha-linolenic acid (18:3(9Z,12Z,15Z)) as substrates. The protein is Acyl-lipid (9-3)-desaturase of Borago officinalis (Bourrache).